We begin with the raw amino-acid sequence, 382 residues long: MNLKEKTRALFAEIFGYPATHTIQAPGRVNLIGEHTDYNDGFVLPCAIDYQTVISCAPRDDRTVRVIAADYDNQVDEFSLDAPIVTYDSQQWSNYVRGVVKHLQQRNNAFGGVDMVISGNVPQGAGLSSSASLEVAVGTVFQQLYHLPLDGAQIALNGQEAENQFVGCNCGIMDQLISALGKKDHALLIDCRTLGAKAVSMPKGVAVVIINSNFKRTLVGSEYNTRREQCETGARFFQQPALRDVSLEAFNAVASELDPVVAKRVRHVLSENARTVEAASALEKGDLQRMGQLMAESHASMRDDFEITVPQIDTLVDIVKATIGDQGGVRMTGGGFGGCVVALIPEDLVPAVRQAVAQQYEAKTGIKETFYVCKPSQGAGQC.

Position 34-37 (34-37) interacts with substrate; it reads EHTD. 124-130 contacts ATP; that stretch reads GAGLSSS. Mg(2+)-binding residues include Ser-130 and Glu-162. The active-site Proton acceptor is the Asp-174. Tyr-223 contributes to the substrate binding site.

Belongs to the GHMP kinase family. GalK subfamily.

It is found in the cytoplasm. The catalysed reaction is alpha-D-galactose + ATP = alpha-D-galactose 1-phosphate + ADP + H(+). Its pathway is carbohydrate metabolism; galactose metabolism. Its function is as follows. Catalyzes the transfer of the gamma-phosphate of ATP to D-galactose to form alpha-D-galactose-1-phosphate (Gal-1-P). This Salmonella paratyphi B (strain ATCC BAA-1250 / SPB7) protein is Galactokinase.